A 287-amino-acid chain; its full sequence is Protein REVEILLE 3 (287 aa).

The region spanning 56 to 110 (TITKSRENWTEQEHDKFLEALHLFDRDWKKIKAFVGSKTVIQIRSHAQKYFLKVQ) is the HTH myb-type domain. The H-T-H motif DNA-binding region spans 83–106 (WKKIKAFVGSKTVIQIRSHAQKYF). The disordered stretch occupies residues 111–135 (KNGTKEHLPPPRPKRKANHPYPQKA).

It is found in the nucleus. Probable transcription factor. The chain is Protein REVEILLE 3 (RVE3) from Arabidopsis thaliana (Mouse-ear cress).